Reading from the N-terminus, the 340-residue chain is Flavonoid 7-O-methyltransferase 2 (340 aa).

Residue Asp207 participates in S-adenosyl-L-methionine binding. His245 functions as the Proton acceptor in the catalytic mechanism.

This sequence belongs to the class I-like SAM-binding methyltransferase superfamily. Cation-independent O-methyltransferase family. Homodimer. Expressed in leaves.

The enzyme catalyses scutellarein 4'-methyl ether + S-adenosyl-L-methionine = ladanein + S-adenosyl-L-homocysteine. It catalyses the reaction acacetin + S-adenosyl-L-methionine = apigenin 4',7-dimethyl ether + S-adenosyl-L-homocysteine. The catalysed reaction is diosmetin + S-adenosyl-L-methionine = luteolin 4',7-dimethyl ether + S-adenosyl-L-homocysteine. It carries out the reaction chrysoeriol + S-adenosyl-L-methionine = velutin + S-adenosyl-L-homocysteine. The enzyme catalyses (2S)-naringenin + S-adenosyl-L-methionine = (2S)-sakuranetin + S-adenosyl-L-homocysteine + H(+). It catalyses the reaction apigenin + S-adenosyl-L-methionine = genkwanin + S-adenosyl-L-homocysteine + H(+). The catalysed reaction is luteolin + S-adenosyl-L-methionine = luteolin 7-methyl ether + S-adenosyl-L-homocysteine + H(+). It carries out the reaction scutellarein + S-adenosyl-L-methionine = scutellarein 7-methyl ether + S-adenosyl-L-homocysteine. It participates in flavonoid metabolism. Flavonoid 7-O-methyltransferase involved in the biosynthesis of polymethoxylated flavonoids natural products such as nevadensin and salvigenin, aroma compounds which contribute to the flavor of sweet basil, and exhibit pharmacological activities such as anti-allergic, anti-oxidant, antibacterial, anti-proliferative, and anti-inflammatory effects. Catalyzes S-adenosylmethionine-dependent regioselective 7-O-methylation of flavonoids; active on various hydroxylated flavonoid substrates, including apigenin (API) and luteolin (LUT), and, with a lower efficiency, scutellarein (SCU), naringenin (NAR), chrysoeriol (CHRYS), diosmetin (DIOS), acacetin (ACA) and scutellarein-7-methyl ether (SCU7Me). This is Flavonoid 7-O-methyltransferase 2 from Ocimum basilicum (Sweet basil).